Consider the following 178-residue polypeptide: Lipid A deacylase PagL (178 aa).

The N-terminal stretch at 1–19 is a signal peptide; sequence MQFLKKNKPLFGIVTLALA. Residues histidine 154, serine 156, and aspartate 168 each act as charge relay system in the active site.

Belongs to the PagL family. Homodimer.

It localises to the cell outer membrane. The catalysed reaction is a 3-(acyloxy)acyl derivative of bacterial toxin + H2O = a 3-hydroxyacyl derivative of bacterial toxin + a fatty acid + H(+). Its function is as follows. Has lipid A 3-O-deacylase activity. Hydrolyzes the ester bond at the 3 position of lipid A, a bioactive component of lipopolysaccharide (LPS), thereby releasing the primary fatty acyl moiety. This Bordetella bronchiseptica (strain ATCC BAA-588 / NCTC 13252 / RB50) (Alcaligenes bronchisepticus) protein is Lipid A deacylase PagL.